Consider the following 525-residue polypeptide: GMP synthase [glutamine-hydrolyzing] (525 aa).

In terms of domain architecture, Glutamine amidotransferase type-1 spans 9-207; sequence RILILDFGSQ…VHEICGCPAD (199 aa). Residue C86 is the Nucleophile of the active site. Residues H181 and E183 contribute to the active site. The GMPS ATP-PPase domain maps to 208 to 400; sequence WTPGNIVDDL…LGLPADMVYR (193 aa). Residue 235-241 participates in ATP binding; it reads SGGVDSS.

In terms of assembly, homodimer.

The enzyme catalyses XMP + L-glutamine + ATP + H2O = GMP + L-glutamate + AMP + diphosphate + 2 H(+). It functions in the pathway purine metabolism; GMP biosynthesis; GMP from XMP (L-Gln route): step 1/1. In terms of biological role, catalyzes the synthesis of GMP from XMP. The chain is GMP synthase [glutamine-hydrolyzing] from Alkalilimnicola ehrlichii (strain ATCC BAA-1101 / DSM 17681 / MLHE-1).